The following is a 148-amino-acid chain: uncharacterized protein (148 aa).

The next 3 helical transmembrane spans lie at 20–42, 52–74, and 118–135; these read YYSKTFFYFLNILGLVFIIIANY, YFLMQIGIISVISSMVIEAVRCY, and IIRYVPSTVITFIICTYI.

It localises to the cell membrane. This is an uncharacterized protein from Rickettsia prowazekii (strain Madrid E).